We begin with the raw amino-acid sequence, 64 residues long: MGMRMMFTVFLLVVLTTTVVSFPSDSASDVRDDEAKDERSDMYKSKRNGRCCHPACGKHFSCGR.

The first 21 residues, 1-21 (MGMRMMFTVFLLVVLTTTVVS), serve as a signal peptide directing secretion. Positions 22 to 47 (FPSDSASDVRDDEAKDERSDMYKSKR) are excised as a propeptide. Deamidated asparagine; in CnIH; partial is present on N48. Disulfide bonds link C51-C56 and C52-C62. Residue C62 is modified to Cysteine amide.

Belongs to the conotoxin A superfamily. Expressed by the venom duct.

It is found in the secreted. Alpha-conotoxins act on postsynaptic membranes, they bind to the nicotinic acetylcholine receptors (nAChR) and thus inhibit them. This chain is Alpha-conotoxin CnIC, found in Conus consors (Singed cone).